Here is a 640-residue protein sequence, read N- to C-terminus: MVKITYPDNSVQEFKDGITPAEIAKGISEGLYRNAIAAEINGELKDLNTPIMQDSTIKLITLDDEIAPKIYRHTMAHIMAQAVARIFGEDRVKLAIGPVIENGFYYDFDIEGHNLSEEDFSKIEEEMKKIIKEDIKIIRKEVNKKEAIELFKDQPYKLELIEELEEDTISVYFQGDFYDLCRGPHLPSTGYVKYFKLLSVSGAYWRGDEKNKMLQRIYGTAFPKKEQLDDYLNMIEEAKRRDHRKLGPKLNLFMLQSEMAPGMPFFLPNGKIVLNELMAYSRQVHKKYGYVEVETPQIMNIKLWHQSGHWDHYKENMFFTEKEDMPMAVKPMNCPGHILIYKNNFVSYRDLPIRMFEFGKVHRYERSGVLHGLFRVRAFTQDDAHIFCMPSQMEEEIIKVIQLTNEIFSTFGFKYEAILSTMPEDHMGDIESWERATDALKKALEKSNMEYRIDEGEGAFYGPKIDFNVTDSLGRKWQCTTIQLDFQMPERFDMVYADENDAQKRPVMIHRAIFGSLERFFGILIENFAGEFPTWLSPVQVSILPVSEKFNEEAKKFSRILEQEGIRVYVNDSDATVGYKIRNEQMKKVPYMIVFGEKEMNSDTINIRTRKGDTIENVSKERFIEEIKNEIKNRNLDLTF.

In terms of domain architecture, TGS spans 1–61 (MVKITYPDNS…MQDSTIKLIT (61 aa)). The segment at 242 to 533 (DHRKLGPKLN…LIENFAGEFP (292 aa)) is catalytic. Cys-334, His-385, and His-510 together coordinate Zn(2+).

The protein belongs to the class-II aminoacyl-tRNA synthetase family. In terms of assembly, homodimer. The cofactor is Zn(2+).

The protein localises to the cytoplasm. The catalysed reaction is tRNA(Thr) + L-threonine + ATP = L-threonyl-tRNA(Thr) + AMP + diphosphate + H(+). In terms of biological role, catalyzes the attachment of threonine to tRNA(Thr) in a two-step reaction: L-threonine is first activated by ATP to form Thr-AMP and then transferred to the acceptor end of tRNA(Thr). Also edits incorrectly charged L-seryl-tRNA(Thr). In Petrotoga mobilis (strain DSM 10674 / SJ95), this protein is Threonine--tRNA ligase.